Reading from the N-terminus, the 382-residue chain is tRNA-specific 2-thiouridylase MnmA (382 aa).

ATP is bound by residues 18 to 25 (AMSGGVDS) and Leu44. The active-site Nucleophile is Cys112. Cys112 and Cys209 are joined by a disulfide. Residue Gly136 participates in ATP binding. Residues 159 to 161 (RDQ) are interaction with tRNA. Cys209 functions as the Cysteine persulfide intermediate in the catalytic mechanism.

It belongs to the MnmA/TRMU family.

Its subcellular location is the cytoplasm. It carries out the reaction S-sulfanyl-L-cysteinyl-[protein] + uridine(34) in tRNA + AH2 + ATP = 2-thiouridine(34) in tRNA + L-cysteinyl-[protein] + A + AMP + diphosphate + H(+). Its function is as follows. Catalyzes the 2-thiolation of uridine at the wobble position (U34) of tRNA, leading to the formation of s(2)U34. This chain is tRNA-specific 2-thiouridylase MnmA, found in Methylobacterium nodulans (strain LMG 21967 / CNCM I-2342 / ORS 2060).